Here is a 428-residue protein sequence, read N- to C-terminus: Glutamate-1-semialdehyde 2,1-aminomutase (428 aa).

An N6-(pyridoxal phosphate)lysine modification is found at lysine 267.

It belongs to the class-III pyridoxal-phosphate-dependent aminotransferase family. HemL subfamily. In terms of assembly, homodimer. Pyridoxal 5'-phosphate serves as cofactor.

The protein resides in the cytoplasm. It catalyses the reaction (S)-4-amino-5-oxopentanoate = 5-aminolevulinate. The protein operates within porphyrin-containing compound metabolism; protoporphyrin-IX biosynthesis; 5-aminolevulinate from L-glutamyl-tRNA(Glu): step 2/2. This chain is Glutamate-1-semialdehyde 2,1-aminomutase, found in Persephonella marina (strain DSM 14350 / EX-H1).